Here is a 274-residue protein sequence, read N- to C-terminus: Nitrogenase iron protein (274 aa).

Residue 8-15 (GKGGIGKS) participates in ATP binding. Position 94 (cysteine 94) interacts with [4Fe-4S] cluster. Arginine 97 is modified (ADP-ribosylarginine; by dinitrogenase reductase ADP-ribosyltransferase). Residue cysteine 131 participates in [4Fe-4S] cluster binding.

The protein belongs to the NifH/BchL/ChlL family. As to quaternary structure, homodimer. [4Fe-4S] cluster is required as a cofactor. In terms of processing, the reversible ADP-ribosylation of Arg-97 inactivates the nitrogenase reductase and regulates nitrogenase activity.

The catalysed reaction is N2 + 8 reduced [2Fe-2S]-[ferredoxin] + 16 ATP + 16 H2O = H2 + 8 oxidized [2Fe-2S]-[ferredoxin] + 2 NH4(+) + 16 ADP + 16 phosphate + 6 H(+). Functionally, the key enzymatic reactions in nitrogen fixation are catalyzed by the nitrogenase complex, which has 2 components: the iron protein and the molybdenum-iron protein. The sequence is that of Nitrogenase iron protein from Azobacteroides pseudotrichonymphae genomovar. CFP2.